The primary structure comprises 247 residues: Chymase (247 aa).

Positions 1-19 (MNLHALCLLLLLLGSSTKA) are cleaved as a signal peptide. Positions 20–21 (GE) are cleaved as a propeptide — activation peptide. A Peptidase S1 domain is found at 22–245 (IIGGTECIPH…YRPWINKILR (224 aa)). Cys-51 and Cys-67 form a disulfide bridge. Catalysis depends on His-66, which acts as the Charge relay system. An N-linked (GlcNAc...) asparagine glycan is attached at Asn-80. Residue Asp-110 is the Charge relay system of the active site. 2 cysteine pairs are disulfide-bonded: Cys-144-Cys-209 and Cys-175-Cys-188. Ser-203 serves as the catalytic Charge relay system.

This sequence belongs to the peptidase S1 family. Granzyme subfamily. Mast cells.

The protein resides in the secreted. It localises to the cytoplasmic granule. It carries out the reaction Preferential cleavage: Phe-|-Xaa &gt; Tyr-|-Xaa &gt; Trp-|-Xaa &gt; Leu-|-Xaa.. Major secreted protease of mast cells with suspected roles in vasoactive peptide generation, extracellular matrix degradation, and regulation of gland secretion. This chain is Chymase (Cma1), found in Rattus norvegicus (Rat).